The sequence spans 767 residues: Transducin-like enhancer protein 1 (767 aa).

2 disordered regions span residues M1 to S26 and A200 to S346. Composition is skewed to basic and acidic residues over residues A200 to P209, R235 to D255, and N277 to P289. The interval S212–S274 is CCN domain. A compositionally biased stretch (low complexity) spans P294–S306. The segment covering L324–S346 has biased composition (polar residues). WD repeat units follow at residues G467–T498, N525–D555, S569–D599, G611–D641, L693–R723, and K734–E764.

This sequence belongs to the WD repeat Groucho/TLE family. In terms of processing, ubiquitinated by XIAP/BIRC4. Abundantly expressed in brain, lung, testis and ovary in comparison with liver, heart, kidney and spleen. Ubiquitously expressed in the developing embryo. Present in unfertilized and fertilized eggs.

The protein resides in the nucleus. Nuclear effector molecule. This Xenopus laevis (African clawed frog) protein is Transducin-like enhancer protein 1 (esg1).